A 437-amino-acid polypeptide reads, in one-letter code: Trigger factor (437 aa).

The PPIase FKBP-type domain maps to 164–249; the sequence is GDRVTIDFAG…LKSVEAPKLP (86 aa).

Belongs to the FKBP-type PPIase family. Tig subfamily.

The protein localises to the cytoplasm. It catalyses the reaction [protein]-peptidylproline (omega=180) = [protein]-peptidylproline (omega=0). Functionally, involved in protein export. Acts as a chaperone by maintaining the newly synthesized protein in an open conformation. Functions as a peptidyl-prolyl cis-trans isomerase. This is Trigger factor from Azoarcus sp. (strain BH72).